The sequence spans 320 residues: Cytochrome f (320 aa).

A signal peptide spans methionine 1–alanine 35. The heme site is built by tyrosine 36, cysteine 56, cysteine 59, and histidine 60. Residues valine 286 to leucine 305 traverse the membrane as a helical segment.

This sequence belongs to the cytochrome f family. As to quaternary structure, the 4 large subunits of the cytochrome b6-f complex are cytochrome b6, subunit IV (17 kDa polypeptide, petD), cytochrome f and the Rieske protein, while the 4 small subunits are PetG, PetL, PetM and PetN. The complex functions as a dimer. Heme serves as cofactor.

It localises to the plastid. The protein resides in the chloroplast thylakoid membrane. Component of the cytochrome b6-f complex, which mediates electron transfer between photosystem II (PSII) and photosystem I (PSI), cyclic electron flow around PSI, and state transitions. The polypeptide is Cytochrome f (petA) (Zea mays (Maize)).